A 209-amino-acid chain; its full sequence is UPF0319 protein VF_1616 (209 aa).

The N-terminal stretch at 1–21 (MKIQSIFAASFCLLSSISAHA) is a signal peptide.

This sequence belongs to the UPF0319 family.

This is UPF0319 protein VF_1616 from Aliivibrio fischeri (strain ATCC 700601 / ES114) (Vibrio fischeri).